Consider the following 302-residue polypeptide: 1,2-dihydroxynaphthalene dioxygenase (302 aa).

VOC domains are found at residues 9 to 124 and 149 to 270; these read ELGY…IFWG and GLGH…PGWR. Fe cation is bound at residue His152. Substrate contacts are provided by residues His152, 199–200, His215, and Tyr256; that span reads DH. His215 contributes to the Fe cation binding site. Glu266 contributes to the Fe cation binding site.

This sequence belongs to the extradiol ring-cleavage dioxygenase family. Requires Fe(2+) as cofactor.

It carries out the reaction naphthalene-1,2-diol + O2 = 2-hydroxychromene-2-carboxylate + H(+). Its pathway is aromatic compound metabolism; naphthalene degradation. Involved in the naphthalene catabolic pathway. Catalyzes the meta-cleavage of 1,2-dihydroxynaphthalene (1,2-DHN) to yield 2-hydroxychromene-2-carboxylic acid. The polypeptide is 1,2-dihydroxynaphthalene dioxygenase (nahC) (Pseudomonas putida (Arthrobacter siderocapsulatus)).